Consider the following 339-residue polypeptide: UDP-N-acetylglucosamine--N-acetylmuramyl-(pentapeptide) pyrophosphoryl-undecaprenol N-acetylglucosamine transferase (339 aa).

UDP-N-acetyl-alpha-D-glucosamine-binding positions include T10–G12, N124, R168, S188, I235, and Q280.

The protein belongs to the glycosyltransferase 28 family. MurG subfamily.

The protein localises to the cell inner membrane. It catalyses the reaction di-trans,octa-cis-undecaprenyl diphospho-N-acetyl-alpha-D-muramoyl-L-alanyl-D-glutamyl-meso-2,6-diaminopimeloyl-D-alanyl-D-alanine + UDP-N-acetyl-alpha-D-glucosamine = di-trans,octa-cis-undecaprenyl diphospho-[N-acetyl-alpha-D-glucosaminyl-(1-&gt;4)]-N-acetyl-alpha-D-muramoyl-L-alanyl-D-glutamyl-meso-2,6-diaminopimeloyl-D-alanyl-D-alanine + UDP + H(+). It functions in the pathway cell wall biogenesis; peptidoglycan biosynthesis. In terms of biological role, cell wall formation. Catalyzes the transfer of a GlcNAc subunit on undecaprenyl-pyrophosphoryl-MurNAc-pentapeptide (lipid intermediate I) to form undecaprenyl-pyrophosphoryl-MurNAc-(pentapeptide)GlcNAc (lipid intermediate II). The chain is UDP-N-acetylglucosamine--N-acetylmuramyl-(pentapeptide) pyrophosphoryl-undecaprenol N-acetylglucosamine transferase from Pseudothermotoga lettingae (strain ATCC BAA-301 / DSM 14385 / NBRC 107922 / TMO) (Thermotoga lettingae).